Here is a 123-residue protein sequence, read N- to C-terminus: S-adenosylmethionine decarboxylase proenzyme 2 (123 aa).

The active-site Schiff-base intermediate with substrate; via pyruvic acid is Ser-65. Ser-65 is subject to Pyruvic acid (Ser); by autocatalysis. Catalysis depends on His-70, which acts as the Proton acceptor; for processing activity. The Proton donor; for catalytic activity role is filled by Cys-85.

This sequence belongs to the prokaryotic AdoMetDC family. Type 1 subfamily. As to quaternary structure, heterotetramer of two alpha and two beta chains arranged as a dimer of alpha/beta heterodimers. It depends on pyruvate as a cofactor. Post-translationally, is synthesized initially as an inactive proenzyme. Formation of the active enzyme involves a self-maturation process in which the active site pyruvoyl group is generated from an internal serine residue via an autocatalytic post-translational modification. Two non-identical subunits are generated from the proenzyme in this reaction, and the pyruvate is formed at the N-terminus of the alpha chain, which is derived from the carboxyl end of the proenzyme. The post-translation cleavage follows an unusual pathway, termed non-hydrolytic serinolysis, in which the side chain hydroxyl group of the serine supplies its oxygen atom to form the C-terminus of the beta chain, while the remainder of the serine residue undergoes an oxidative deamination to produce ammonia and the pyruvoyl group blocking the N-terminus of the alpha chain.

It catalyses the reaction S-adenosyl-L-methionine + H(+) = S-adenosyl 3-(methylsulfanyl)propylamine + CO2. It functions in the pathway amine and polyamine biosynthesis; S-adenosylmethioninamine biosynthesis; S-adenosylmethioninamine from S-adenosyl-L-methionine: step 1/1. In terms of biological role, catalyzes the decarboxylation of S-adenosylmethionine to S-adenosylmethioninamine (dcAdoMet), the propylamine donor required for the synthesis of the polyamines spermine and spermidine from the diamine putrescine. This chain is S-adenosylmethionine decarboxylase proenzyme 2, found in Bacillus anthracis.